The primary structure comprises 106 residues: MYISRNMEQWNEFLDLMRKAFEQGKEQELLTLLLTADERDAVALRVQIVSQLLDKSLAQREIQQILNTSAATITRGSNMIKIMPPEFMDWVKQQLNHNNKNELGSD.

Residues 59 to 82 (QREIQQILNTSAATITRGSNMIKI) mediate DNA binding.

Belongs to the TrpR family. In terms of assembly, homodimer.

Its subcellular location is the cytoplasm. This protein is an aporepressor. When complexed with L-tryptophan it binds the operator region of the trp operon and prevents the initiation of transcription. In Histophilus somni (strain 129Pt) (Haemophilus somnus), this protein is Trp operon repressor homolog.